A 1673-amino-acid chain; its full sequence is Calmodulin-binding transcription activator 1 (1673 aa).

Positions 63 to 188 (KCSSLPKERH…YLNVPAIEDC (126 aa)) form a DNA-binding region, CG-1. The Nuclear localization signal signature appears at 112–119 (RKKVKYRK). Residues 283–375 (HRIISPKVEP…LNSDPDMVDS (93 aa)) are disordered. Basic and acidic residues predominate over residues 302–313 (EVQHNDVSEGKH). The span at 337–367 (HQSSTEVSSTNQVEVPDTTQSSPVSISSGLN) shows a compositional bias: polar residues. The IPT/TIG domain maps to 875–953 (DYSPEWSYPE…ISNSVVFEYK (79 aa)). The interval 990–1021 (MAEMTGSQQHKQASGGGSSGGGSGSGNGGSQA) is disordered. Positions 1003–1018 (SGGGSSGGGSGSGNGG) are enriched in gly residues. 3 ANK repeats span residues 1064–1093 (RGMT…KHAD), 1109–1129 (FSCT…AVVL), and 1143–1172 (LGRL…DEQA). 2 disordered regions span residues 1215–1246 (ASTN…PKKH) and 1264–1317 (ALSL…GSQP). Positions 1273–1289 (RKQSPSSKQSVPETLSP) are enriched in polar residues. IQ domains follow at residues 1547-1576 (QEVA…AAIL), 1577-1599 (IQSK…AAVL), and 1600-1622 (IQKY…TAVI).

The protein belongs to the CAMTA family. May interact with calmodulin. Normally expressed in non-neoplastic adult central nervous system tissues: detected in whole brain, cerebellum, brain cortex, occipital lobe, frontal lobe, temporal lobe, putamen. Expression levels are low in oligodendroglial tumors, and are reduced by half in oligodendroglioma and astrocytoma cases with 1p loss of heterozygosity. Detected in neuroblastic-type cultured neuroblastoma cells. Expressed in heart and kidney.

It localises to the nucleus. Its subcellular location is the cytoplasm. Functionally, transcriptional activator. The chain is Calmodulin-binding transcription activator 1 from Homo sapiens (Human).